The chain runs to 298 residues: L-xylulose reductase (298 aa).

Positions 19, 68, and 103 each coordinate NADP(+). Catalysis depends on proton donor residues S161, S162, and Y175. Positions 175, 179, and 207 each coordinate NADP(+). The active-site Lowers pKa of active site Tyr is K179.

The protein belongs to the short-chain dehydrogenases/reductases (SDR) family.

The enzyme catalyses xylitol + NADP(+) = L-xylulose + NADPH + H(+). Its pathway is carbohydrate degradation; L-arabinose degradation via L-arabinitol; D-xylulose 5-phosphate from L-arabinose (fungal route): step 3/5. L-xylulose reductase involved in the catabolism of L-arabinose through an oxidoreductive pathway. Catalyzes the NADPH-dependent reduction of L-xylulose. This chain is L-xylulose reductase, found in Aspergillus niger (strain ATCC 1015 / CBS 113.46 / FGSC A1144 / LSHB Ac4 / NCTC 3858a / NRRL 328 / USDA 3528.7).